A 243-amino-acid polypeptide reads, in one-letter code: DNA repair protein RecO (243 aa).

The protein belongs to the RecO family.

In terms of biological role, involved in DNA repair and RecF pathway recombination. This chain is DNA repair protein RecO, found in Hyphomonas neptunium (strain ATCC 15444).